The primary structure comprises 491 residues: Ribonuclease Y (491 aa).

A helical membrane pass occupies residues 4 to 24 (LIATVGVVAVAALVIAIFVVI). In terms of domain architecture, KH spans 181–247 (VVSVVHLPGD…RVALERLVDD (67 aa)). The HD domain occupies 307–400 (VLKHLVETAH…TQAADAISGG (94 aa)).

The protein belongs to the RNase Y family.

The protein resides in the cell membrane. Endoribonuclease that initiates mRNA decay. The polypeptide is Ribonuclease Y (Acidothermus cellulolyticus (strain ATCC 43068 / DSM 8971 / 11B)).